Reading from the N-terminus, the 512-residue chain is Catalase (512 aa).

Active-site residues include His-60 and Asn-133. Tyr-344 is a binding site for heme. A Phosphoserine modification is found at Ser-363. Over residues 488–505 the composition is skewed to basic and acidic residues; the sequence is EVKKMEEKAPKPINKGEP. The tract at residues 488 to 512 is disordered; it reads EVKKMEEKAPKPINKGEPHMFQGSS.

The protein belongs to the catalase family. Requires heme as cofactor.

The protein localises to the peroxisome matrix. The enzyme catalyses 2 H2O2 = O2 + 2 H2O. Its function is as follows. Catalyzes the degradation of hydrogen peroxide (H(2)O(2)) generated by peroxisomal oxidases to water and oxygen, thereby protecting cells from the toxic effects of hydrogen peroxide. In Schizosaccharomyces pombe (strain 972 / ATCC 24843) (Fission yeast), this protein is Catalase (cta1).